Here is a 1794-residue protein sequence, read N- to C-terminus: Non-reducing polyketide synthase nscA (1794 aa).

The interval 19 to 256 (DLKDLFRRLH…PLPVYDGLCH (238 aa)) is N-terminal acylcarrier protein transacylase domain (SAT). Positions 389–822 (ASKLAIVGMA…GGNTTVLLED (434 aa)) constitute a Ketosynthase family 3 (KS3) domain. The tract at residues 427–448 (PDRFDLNTHYDPTGKTENATQT) is disordered. Residues 428–440 (DRFDLNTHYDPTG) are compositionally biased toward basic and acidic residues. Residues cysteine 562, histidine 697, and histidine 740 each act as for beta-ketoacyl synthase activity in the active site. A malonyl-CoA:ACP transacylase (MAT) domain region spans residues 928-1249 (FTGQGAYYSG…LVTLHLAGLT (322 aa)). Positions 1314–1633 (TSLVHQITAE…RLLMDRFFSP (320 aa)) are product template (PT) domain. An N-terminal hotdog fold region spans residues 1318–1454 (HQITAETVEA…GVVRFEDPAA (137 aa)). One can recognise a PKS/mFAS DH domain in the interval 1318–1628 (HQITAETVEA…FRRVPRLLMD (311 aa)). Histidine 1350 acts as the Proton acceptor; for dehydratase activity in catalysis. Residues 1482 to 1628 (ASKLSKPLAY…FRRVPRLLMD (147 aa)) are C-terminal hotdog fold. Aspartate 1539 functions as the Proton donor; for dehydratase activity in the catalytic mechanism. Disordered stretches follow at residues 1637–1665 (SHAE…EAPA) and 1682–1718 (ASKS…GDPV). Composition is skewed to polar residues over residues 1644 to 1655 (QETAPSATSVKK) and 1685 to 1701 (SEVS…QESP). The 78-residue stretch at 1717-1794 (PVDAGVVGQC…EMTAWLEEYC (78 aa)) folds into the Carrier domain. Serine 1754 is subject to O-(pantetheine 4'-phosphoryl)serine.

It depends on pantetheine 4'-phosphate as a cofactor.

It participates in secondary metabolite biosynthesis. Its function is as follows. Non-reducing polyketide synthase; part of the gene cluster that mediates the biosynthesis of neosartoricin, a prenylated anthracenone that exhibits T-cell antiproliferative activity, suggestive of a physiological role as an immunosuppressive agent. The non-reducing polyketide synthase nscA probably synthesizes and cyclizes the decaketide backbone. The hydrolase nscB then mediates the product release through hydrolysis followed by spontaneous decarboxylation. The prenyltransferase nscD catalyzes the addition of the dimethylallyl group to the aromatic C5. The FAD-dependent monooxygenase nscC is then responsible for the stereospecific hydroxylation at C2. There is no gene encoding O-acetyltransferase in the nsc gene cluster; thus, the last step of 2-O-acetylation leading to neosartoricin may be catalyzed by an unidentified O-acetyltransferase. This is Non-reducing polyketide synthase nscA from Neosartorya fischeri (strain ATCC 1020 / DSM 3700 / CBS 544.65 / FGSC A1164 / JCM 1740 / NRRL 181 / WB 181) (Aspergillus fischerianus).